We begin with the raw amino-acid sequence, 209 residues long: Large ribosomal subunit protein uL3 (209 aa).

The interval 141 to 163 is disordered; sequence RAVGSMGASSDPSRTFKNKRMPG.

It belongs to the universal ribosomal protein uL3 family. Part of the 50S ribosomal subunit. Forms a cluster with proteins L14 and L19.

Functionally, one of the primary rRNA binding proteins, it binds directly near the 3'-end of the 23S rRNA, where it nucleates assembly of the 50S subunit. This Clostridium botulinum (strain ATCC 19397 / Type A) protein is Large ribosomal subunit protein uL3.